A 570-amino-acid chain; its full sequence is Glycine--tRNA ligase (570 aa).

2 residues coordinate substrate: R95 and E159. ATP is bound by residues 191–193 (RNE), 201–206 (IRLREF), 312–313 (EV), and 426–429 (GLDR). Residue 206 to 210 (FNQAE) coordinates substrate. 422–426 (EPSFG) is a substrate binding site.

Belongs to the class-II aminoacyl-tRNA synthetase family.

It localises to the cytoplasm. The catalysed reaction is tRNA(Gly) + glycine + ATP = glycyl-tRNA(Gly) + AMP + diphosphate. Catalyzes the attachment of glycine to tRNA(Gly). This Archaeoglobus fulgidus (strain ATCC 49558 / DSM 4304 / JCM 9628 / NBRC 100126 / VC-16) protein is Glycine--tRNA ligase.